A 172-amino-acid chain; its full sequence is Galectin-related protein (172 aa).

The residue at position 2 (Ala-2) is an N-acetylalanine. Phosphoserine is present on residues Ser-22 and Ser-25. The 130-residue stretch at 39-168 folds into the Galectin domain; it reads PFCGHIKGGM…TIKINGDLQI (130 aa).

Monomer.

Its function is as follows. Does not bind lactose, and may not bind carbohydrates. In Homo sapiens (Human), this protein is Galectin-related protein (LGALSL).